The primary structure comprises 285 residues: Nucleotide-binding protein HI_1146 (285 aa).

8–15 contributes to the ATP binding site; that stretch reads GRSGAGKS. 56–59 is a GTP binding site; the sequence is DIRN.

This sequence belongs to the RapZ-like family.

Functionally, displays ATPase and GTPase activities. This chain is Nucleotide-binding protein HI_1146, found in Haemophilus influenzae (strain ATCC 51907 / DSM 11121 / KW20 / Rd).